The chain runs to 595 residues: L-allo-isoleucine:holo-[CmaA peptidyl-carrier protein] ligase (595 aa).

Positions 507–582 constitute a Carrier domain; that stretch reads VVSPQAGSAV…EWVQYYATHA (76 aa). Ser-542 bears the O-(pantetheine 4'-phosphoryl)serine mark.

The protein belongs to the ATP-dependent AMP-binding enzyme family. As to quaternary structure, homodimer. Requires pantetheine 4'-phosphate as cofactor.

It catalyses the reaction L-alloisoleucine + holo-[CmaA peptidyl-carrier protein] + ATP = L-alloisoleucyl-[CmaA peptidyl-carrier protein] + AMP + diphosphate. Functionally, involved in the biosynthesis of the phytotoxin coronatine (COR) which mimics the plant hormone jasmonic acid isoleucine and promotes opening of stomata for bacterial entry, bacterial growth in the apoplast, systemic susceptibility, and disease symptoms. CmaA catalyzes the adenylation of L-allo-isoleucine (via the A domain) and the attachment of L-allo-isoleucine to the 4'-phosphopantetheine arm located within the T domain of CmaA. It can also use L-isoleucine, L-leucine and L-valine as substrates. The protein is L-allo-isoleucine:holo-[CmaA peptidyl-carrier protein] ligase of Pseudomonas savastanoi pv. glycinea (Pseudomonas syringae pv. glycinea).